A 381-amino-acid chain; its full sequence is Queuine tRNA-ribosyltransferase (381 aa).

The Proton acceptor role is filled by Asp92. Residues 92–96 (DSGGF), Asp146, Gln190, and Gly217 contribute to the substrate site. Residues 248-254 (GVGRPED) form an RNA binding region. Asp267 serves as the catalytic Nucleophile. An RNA binding; important for wobble base 34 recognition region spans residues 272–276 (TRNAR). Zn(2+)-binding residues include Cys305, Cys307, Cys310, and His337.

Belongs to the queuine tRNA-ribosyltransferase family. In terms of assembly, homodimer. Within each dimer, one monomer is responsible for RNA recognition and catalysis, while the other monomer binds to the replacement base PreQ1. Requires Zn(2+) as cofactor.

It catalyses the reaction 7-aminomethyl-7-carbaguanine + guanosine(34) in tRNA = 7-aminomethyl-7-carbaguanosine(34) in tRNA + guanine. It participates in tRNA modification; tRNA-queuosine biosynthesis. In terms of biological role, catalyzes the base-exchange of a guanine (G) residue with the queuine precursor 7-aminomethyl-7-deazaguanine (PreQ1) at position 34 (anticodon wobble position) in tRNAs with GU(N) anticodons (tRNA-Asp, -Asn, -His and -Tyr). Catalysis occurs through a double-displacement mechanism. The nucleophile active site attacks the C1' of nucleotide 34 to detach the guanine base from the RNA, forming a covalent enzyme-RNA intermediate. The proton acceptor active site deprotonates the incoming PreQ1, allowing a nucleophilic attack on the C1' of the ribose to form the product. After dissociation, two additional enzymatic reactions on the tRNA convert PreQ1 to queuine (Q), resulting in the hypermodified nucleoside queuosine (7-(((4,5-cis-dihydroxy-2-cyclopenten-1-yl)amino)methyl)-7-deazaguanosine). The protein is Queuine tRNA-ribosyltransferase of Xanthomonas axonopodis pv. citri (strain 306).